Consider the following 530-residue polypeptide: GMP synthase [glutamine-hydrolyzing] (530 aa).

A Glutamine amidotransferase type-1 domain is found at 4 to 205 (RILILDYGSQ…VREICGCEGD (202 aa)). The active-site Nucleophile is cysteine 84. Residues histidine 179 and glutamate 181 contribute to the active site. A GMPS ATP-PPase domain is found at 206–398 (WNMPDYISEA…LGLPPQMVYR (193 aa)). 233 to 239 (SGGVDSS) provides a ligand contact to ATP.

In terms of assembly, homodimer.

It catalyses the reaction XMP + L-glutamine + ATP + H2O = GMP + L-glutamate + AMP + diphosphate + 2 H(+). It participates in purine metabolism; GMP biosynthesis; GMP from XMP (L-Gln route): step 1/1. Catalyzes the synthesis of GMP from XMP. In Bordetella avium (strain 197N), this protein is GMP synthase [glutamine-hydrolyzing].